We begin with the raw amino-acid sequence, 1958 residues long: Callose synthase 7 (1958 aa).

Residues 1–29 form a disordered region; sequence MASTSSGGRGEDGRPPQMQPVRSMSRKMT. At 1-504 the chain is on the cytoplasmic side; the sequence is MASTSSGGRG…LYRSFDRMWM (504 aa). The helical transmembrane segment at 505 to 525 threads the bilayer; that stretch reads FLVLSLQTMIIVAWHPSGSIL. The Extracellular portion of the chain corresponds to 526–535; that stretch reads AIFTEDVFRN. The chain crosses the membrane as a helical span at residues 536-556; sequence VLTIFITSAFLNLLQATLDLV. Residues 557–569 are Cytoplasmic-facing; sequence LSFGAWKSLKFSQ. Residues 570-590 traverse the membrane as a helical segment; that stretch reads IMRYITKFLMAAMWAIMLPIT. Residues 591–620 are Extracellular-facing; sequence YSKSVQNPTGLIKFFSSWVGSWLHRSLYDY. Residues 621-641 form a helical membrane-spanning segment; that stretch reads AIALYVLPNILAAVFFLLPPL. Topologically, residues 642–673 are cytoplasmic; sequence RRIMERSNMRIVTLIMWWAQPKLYIGRGMHEE. Residues 674-694 form a helical membrane-spanning segment; the sequence is MFALFKYTFFWVMLLLSKLAF. The Extracellular portion of the chain corresponds to 695-730; it reads SYYVEILPLVNPTKLIWDMHVVNYEWHEFFPNATHN. A helical transmembrane segment spans residues 731 to 751; it reads IGVIIAIWGPIVLVYFMDTQI. Topologically, residues 752-1496 are cytoplasmic; that stretch reads WYAIFSTLFG…FDFYRMLSFY (745 aa). The helical transmembrane segment at 1497-1517 threads the bilayer; sequence FTTVGFYFSSMITVLTVYVFL. Residues 1518–1547 are Extracellular-facing; the sequence is YGRLYLVLSGLEKNILQSASVHESNALEQA. Residues 1548-1568 form a helical membrane-spanning segment; that stretch reads LAAQSVFQLGFLMVLPMVMEI. Residues 1569–1576 lie on the Cytoplasmic side of the membrane; it reads GLEKGFRT. Residues 1577-1597 traverse the membrane as a helical segment; the sequence is ALGDFIIMQLQLASVFFTFQL. The Extracellular portion of the chain corresponds to 1598–1640; it reads GTKAHYFGRTILHGGSKYRATGRGFVVFHAKFAENYRLYSRSH. Residues 1641 to 1661 form a helical membrane-spanning segment; it reads FVKGLELVILLVVYQVYGTSY. Topologically, residues 1662-1667 are cytoplasmic; that stretch reads RSSSTY. The helical transmembrane segment at 1668-1688 threads the bilayer; sequence MYITFSMWFLVTSWLFAPFIF. Residues 1689–1742 are Extracellular-facing; sequence NPSGFEWQKTVDDWTDWKRWMGNRGGIGIVLDKSWESWWDIEQEHLKHTNLRGR. Residues 1743-1763 traverse the membrane as a helical segment; that stretch reads VLEILLALRFLLYQYGIVYHL. Over 1764-1771 the chain is Cytoplasmic; it reads NIARRHTT. Residues 1772-1792 traverse the membrane as a helical segment; sequence FLVYGLSWAILLSVLLVLKMV. Topologically, residues 1793–1812 are extracellular; sequence SMGRRKFGTDFQVMFRILKA. The chain crosses the membrane as a helical span at residues 1813 to 1833; it reads LLFLGFLSVMTVLFVVCGLTI. At 1834–1835 the chain is on the cytoplasmic side; it reads SD. Residues 1836–1856 traverse the membrane as a helical segment; that stretch reads LFASILAFLPTGWAILLIGQA. Residues 1857–1878 lie on the Extracellular side of the membrane; that stretch reads LRSVFKGLGFWDSVKELGRAYE. The helical transmembrane segment at 1879–1899 threads the bilayer; that stretch reads YIMGLVIFTPIAVLSWFPFVS. Over 1900–1958 the chain is Cytoplasmic; it reads EFQTRLLFNQAFSRGLQISMILAGKKDKETPSTKYLGHTEESFGLEHDTNTFNHYYLWT.

It belongs to the glycosyltransferase 48 family.

Its subcellular location is the cell membrane. It catalyses the reaction [(1-&gt;3)-beta-D-glucosyl](n) + UDP-alpha-D-glucose = [(1-&gt;3)-beta-D-glucosyl](n+1) + UDP + H(+). Functionally, involved in callose synthesis at the forming cell plate during cytokinesis. During plant growth and development, callose is found as a transitory component of the cell plate in dividing cells, is a major component of pollen mother cell walls and pollen tubes, and is found as a structural component of plasmodesmatal canals. In Arabidopsis thaliana (Mouse-ear cress), this protein is Callose synthase 7 (CALS7).